Here is a 296-residue protein sequence, read N- to C-terminus: Light-independent protochlorophyllide reductase iron-sulfur ATP-binding protein (296 aa).

ATP-binding positions include 10-15 and Lys-39; that span reads GIGKST. Position 14 (Ser-14) interacts with Mg(2+). 2 residues coordinate [4Fe-4S] cluster: Cys-95 and Cys-129. 180–181 is an ATP binding site; that stretch reads NR.

Belongs to the NifH/BchL/ChlL family. In terms of assembly, homodimer. Protochlorophyllide reductase is composed of three subunits; ChlL, ChlN and ChlB. Requires [4Fe-4S] cluster as cofactor.

It is found in the plastid. It localises to the chloroplast. It carries out the reaction chlorophyllide a + oxidized 2[4Fe-4S]-[ferredoxin] + 2 ADP + 2 phosphate = protochlorophyllide a + reduced 2[4Fe-4S]-[ferredoxin] + 2 ATP + 2 H2O. It participates in porphyrin-containing compound metabolism; chlorophyll biosynthesis (light-independent). Functionally, component of the dark-operative protochlorophyllide reductase (DPOR) that uses Mg-ATP and reduced ferredoxin to reduce ring D of protochlorophyllide (Pchlide) to form chlorophyllide a (Chlide). This reaction is light-independent. The L component serves as a unique electron donor to the NB-component of the complex, and binds Mg-ATP. The sequence is that of Light-independent protochlorophyllide reductase iron-sulfur ATP-binding protein from Chlorokybus atmophyticus (Soil alga).